Reading from the N-terminus, the 61-residue chain is Conotoxin Tx-D021 (61 aa).

An N-terminal signal peptide occupies residues 1–22 (MRCLPVFVILLLLIASTPSVDA). Residues 23-48 (RAKTRDDMSLASFHDDAKRILQILQD) constitute a propeptide that is removed on maturation. Cys60 carries the post-translational modification Cysteine amide.

The protein belongs to the conotoxin T superfamily. Post-translationally, contains 2 disulfide bonds that can be either 'C1-C3, C2-C4' or 'C1-C4, C2-C3', since these disulfide connectivities have been observed for conotoxins with cysteine framework V (for examples, see AC P0DQQ7 and AC P81755). In terms of tissue distribution, expressed by the venom duct.

Its subcellular location is the secreted. The sequence is that of Conotoxin Tx-D021 from Conus textile (Cloth-of-gold cone).